Reading from the N-terminus, the 292-residue chain is Coiled-coil domain-containing protein 137 (292 aa).

Over residues 1 to 16 (MAGLRRGAAAVAPAGT) the composition is skewed to low complexity. 4 disordered regions span residues 1–94 (MAGL…AQAA), 139–183 (FLSK…EKAA), 205–243 (PELT…LTTS), and 263–292 (ALKR…EMQL). 3 stretches are compositionally biased toward basic and acidic residues: residues 57 to 78 (KNQD…RQEM), 155 to 164 (PKKEKSERKK), and 173 to 183 (KARQRREEKAA). Residues 156-194 (KKEKSERKKAFQKRRLDKARQRREEKAAERLEQELLQDT) adopt a coiled-coil conformation. A compositionally biased stretch (low complexity) spans 222–232 (KKSLMLKKLLS). Ser232 carries the phosphoserine modification. A compositionally biased stretch (polar residues) spans 234–243 (GSVSQPLTTS). A coiled-coil region spans residues 247 to 276 (QRIVAEERERAVNAYRALKRLQQQRQETQS).

It is found in the chromosome. The protein is Coiled-coil domain-containing protein 137 (CCDC137) of Bos taurus (Bovine).